The sequence spans 217 residues: Flagellar L-ring protein 1 (217 aa).

Positions 1-16 are cleaved as a signal peptide; that stretch reads MTLARLAPLAALLLAA. Cysteine 17 carries N-palmitoyl cysteine lipidation. A lipid anchor (S-diacylglycerol cysteine) is attached at cysteine 17.

This sequence belongs to the FlgH family. As to quaternary structure, the basal body constitutes a major portion of the flagellar organelle and consists of four rings (L,P,S, and M) mounted on a central rod.

It localises to the cell outer membrane. The protein resides in the bacterial flagellum basal body. Functionally, assembles around the rod to form the L-ring and probably protects the motor/basal body from shearing forces during rotation. The sequence is that of Flagellar L-ring protein 1 from Chromobacterium violaceum (strain ATCC 12472 / DSM 30191 / JCM 1249 / CCUG 213 / NBRC 12614 / NCIMB 9131 / NCTC 9757 / MK).